We begin with the raw amino-acid sequence, 163 residues long: Inorganic pyrophosphatase (163 aa).

Residues K21, R35, and Y47 each contribute to the substrate site. Mg(2+)-binding residues include D57, D62, and D94. A substrate-binding site is contributed by Y131.

The protein belongs to the PPase family. Homohexamer. It depends on Mg(2+) as a cofactor.

The protein localises to the cytoplasm. It catalyses the reaction diphosphate + H2O = 2 phosphate + H(+). In terms of biological role, catalyzes the hydrolysis of inorganic pyrophosphate (PPi) forming two phosphate ions. This chain is Inorganic pyrophosphatase, found in Halalkalibacterium halodurans (strain ATCC BAA-125 / DSM 18197 / FERM 7344 / JCM 9153 / C-125) (Bacillus halodurans).